We begin with the raw amino-acid sequence, 261 residues long: RING finger and CHY zinc finger domain-containing protein 1 (261 aa).

The segment at 13–80 (QERGQRGCEH…AQQTCEECST (68 aa)) adopts a CHY-type zinc-finger fold. Positions 20, 22, 33, 34, 40, 43, 44, 50, 62, 65, 75, 78, 87, 90, 101, 102, 105, 108, 118, 119, 122, 125, 134, and 136 each coordinate Zn(2+). The segment at 82-144 (FGEYYCDICH…KCIENVSRQN (63 aa)) adopts a CTCHY-type zinc-finger fold. Residues 145–189 (CPICLEDIHTSRVVAHVLPCGHLLHRTCYEEMLKEGYRCPLCMHS) form an RING-type zinc finger. S257 carries the post-translational modification Phosphoserine.

As to quaternary structure, monomer and homodimer. Interacts with AR, MDM2, KAT5, PLAG1, PLAGL2, COPE, UBE2D2 and GORAB/NTKLBP1. In terms of processing, subject to ubiquitination and proteasomal degradation. Interaction with PLAGL2 or KAT5 enhances protein stability.

It is found in the nucleus. It localises to the nucleus speckle. The protein localises to the cytoplasm. It catalyses the reaction S-ubiquitinyl-[E2 ubiquitin-conjugating enzyme]-L-cysteine + [acceptor protein]-L-lysine = [E2 ubiquitin-conjugating enzyme]-L-cysteine + N(6)-ubiquitinyl-[acceptor protein]-L-lysine.. It functions in the pathway protein modification; protein ubiquitination. Functionally, E3 ubiquitin-protein ligase that mediates ubiquitination of target proteins, including p53/TP53, TP73, HDAC1 and CDKN1B. Mediates ubiquitination and degradation of p53/TP53; preferentially acts on tetrameric p53/TP53. Catalyzes monoubiquitinates the translesion DNA polymerase POLH. Involved in the ribosome-associated quality control (RQC) pathway, which mediates the extraction of incompletely synthesized nascent chains from stalled ribosomes: RCHY1 acts downstream of NEMF and recognizes CAT tails associated with stalled nascent chains, leading to their ubiquitination and degradation. Has no E3 ubiquitin-protein ligase activity. The sequence is that of RING finger and CHY zinc finger domain-containing protein 1 (RCHY1) from Homo sapiens (Human).